A 461-amino-acid chain; its full sequence is Chromosomal replication initiator protein DnaA (461 aa).

The domain I, interacts with DnaA modulators stretch occupies residues 1–84 (MAVSLWQQCI…RFDIGSRPSA (84 aa)). The domain II stretch occupies residues 84-124 (AKKFEPAPVATVRAPNTQTKATVGTYFNTQAEPIANANHRS). The segment at 125 to 341 (NINPTYQFDN…GALNRVIANA (217 aa)) is domain III, AAA+ region. Positions 169, 171, 172, and 173 each coordinate ATP. The domain IV, binds dsDNA stretch occupies residues 342-461 (NFTGRPITID…YANLIRTLSS (120 aa)).

Belongs to the DnaA family. As to quaternary structure, oligomerizes as a right-handed, spiral filament on DNA at oriC.

It localises to the cytoplasm. In terms of biological role, plays an essential role in the initiation and regulation of chromosomal replication. ATP-DnaA binds to the origin of replication (oriC) to initiate formation of the DNA replication initiation complex once per cell cycle. Binds the DnaA box (a 9 base pair repeat at the origin) and separates the double-stranded (ds)DNA. Forms a right-handed helical filament on oriC DNA; dsDNA binds to the exterior of the filament while single-stranded (ss)DNA is stabiized in the filament's interior. The ATP-DnaA-oriC complex binds and stabilizes one strand of the AT-rich DNA unwinding element (DUE), permitting loading of DNA polymerase. After initiation quickly degrades to an ADP-DnaA complex that is not apt for DNA replication. Binds acidic phospholipids. This Shewanella putrefaciens (strain CN-32 / ATCC BAA-453) protein is Chromosomal replication initiator protein DnaA.